A 315-amino-acid chain; its full sequence is Calumenin (315 aa).

The first 19 residues, 1–19, serve as a signal peptide directing secretion; sequence MDLRQFLMCLSLCTAFALS. The residue at position 44 (Ser-44) is a Phosphoserine. Tyr-47 carries the phosphotyrosine modification. Position 65 is a phosphothreonine (Thr-65). 6 EF-hand domains span residues 68–103, 104–139, 151–186, 188–223, 229–264, and 265–300; these read ESKE…AQKR, WIYE…YVLD, QMMV…EEYD, MKDI…HDGN, WVKT…SDYD, and HAEA…FVGS. Residue Ser-69 is modified to Phosphoserine. Ca(2+) contacts are provided by Asp-81, Asp-83, Asp-85, Glu-92, Asp-117, Asn-119, Asp-121, and Glu-128. The N-linked (GlcNAc...) asparagine glycan is linked to Asn-131. Asp-164 provides a ligand contact to Ca(2+). Lys-165 bears the N6-acetyllysine mark. Ca(2+) is bound by residues Asp-166, Asp-168, Glu-175, Asp-201, Asn-203, Asp-205, Glu-212, Asp-242, Asn-244, Asp-246, Lys-248, and Glu-253. Phosphothreonine is present on Thr-254. 2 positions are modified to phosphoserine: Ser-261 and Ser-277. Residues Asp-278, Asn-280, Asp-282, Lys-284, and Glu-289 each contribute to the Ca(2+) site. The Prevents secretion from ER signature appears at 312–315; sequence HDEF.

It belongs to the CREC family. In terms of assembly, interacts with GGCX.

The protein localises to the endoplasmic reticulum membrane. It is found in the golgi apparatus. It localises to the secreted. The protein resides in the melanosome. Its subcellular location is the sarcoplasmic reticulum lumen. In terms of biological role, involved in regulation of vitamin K-dependent carboxylation of multiple N-terminal glutamate residues. Seems to inhibit gamma-carboxylase GGCX. Binds 7 calcium ions with a low affinity. In Pongo abelii (Sumatran orangutan), this protein is Calumenin (CALU).